Reading from the N-terminus, the 300-residue chain is Acetylglutamate kinase (300 aa).

Substrate-binding positions include 73-74 (GG), Arg-95, and Asn-197.

The protein belongs to the acetylglutamate kinase family. ArgB subfamily.

The protein localises to the cytoplasm. The catalysed reaction is N-acetyl-L-glutamate + ATP = N-acetyl-L-glutamyl 5-phosphate + ADP. It functions in the pathway amino-acid biosynthesis; L-arginine biosynthesis; N(2)-acetyl-L-ornithine from L-glutamate: step 2/4. Its function is as follows. Catalyzes the ATP-dependent phosphorylation of N-acetyl-L-glutamate. This Polynucleobacter asymbioticus (strain DSM 18221 / CIP 109841 / QLW-P1DMWA-1) (Polynucleobacter necessarius subsp. asymbioticus) protein is Acetylglutamate kinase.